Consider the following 338-residue polypeptide: MSKPIVLSGVQPSGELSIGNYLGALRQWQQMQDDYDCQYCVVDLHAITVRQDPKALHEATLDALAICLAVGVDPKKSTLFVQSHVPEHAQLGWLLNCYTQMGELSRMTQFKDKSARHSNDVNVGLFDYPVLMAADILLYGAHQVPVGSDQKQHLELARDIATRFNNIYSPEAPIFTVPEPYIPQVNARVMSLQDATKKMSKSDDNRKNVITLLEEPKSILKKINKAQTDAEMPPRIAHDWENKAGISNLMGLYSAATGKTFEEIEAQYQGVEMYGPFKKDVGEAIVTMLEPIQEEYKRIREDRAYMDAVMKAGAEKASERAAVTLKKAYEAVGFVTRP.

Residues 11–13 (QPS) and 19–20 (GN) contribute to the ATP site. A 'HIGH' region motif is present at residues 12 to 20 (PSGELSIGN). An L-tryptophan-binding site is contributed by aspartate 135. Residues 147–149 (GSD), valine 189, and 198–202 (KMSKS) each bind ATP. The 'KMSKS' region signature appears at 198–202 (KMSKS).

The protein belongs to the class-I aminoacyl-tRNA synthetase family. As to quaternary structure, homodimer.

The protein resides in the cytoplasm. It catalyses the reaction tRNA(Trp) + L-tryptophan + ATP = L-tryptophyl-tRNA(Trp) + AMP + diphosphate + H(+). Its function is as follows. Catalyzes the attachment of tryptophan to tRNA(Trp). The chain is Tryptophan--tRNA ligase from Aliivibrio fischeri (strain ATCC 700601 / ES114) (Vibrio fischeri).